Here is a 494-residue protein sequence, read N- to C-terminus: ATP synthase subunit alpha, chloroplastic (494 aa).

Residue 170–177 (GDRQTGKT) participates in ATP binding.

It belongs to the ATPase alpha/beta chains family. In terms of assembly, F-type ATPases have 2 components, CF(1) - the catalytic core - and CF(0) - the membrane proton channel. CF(1) has five subunits: alpha(3), beta(3), gamma(1), delta(1), epsilon(1). CF(0) has four main subunits: a, b, b' and c.

The protein localises to the plastid. Its subcellular location is the chloroplast thylakoid membrane. It carries out the reaction ATP + H2O + 4 H(+)(in) = ADP + phosphate + 5 H(+)(out). Produces ATP from ADP in the presence of a proton gradient across the membrane. The alpha chain is a regulatory subunit. The protein is ATP synthase subunit alpha, chloroplastic of Pinus thunbergii (Japanese black pine).